A 799-amino-acid chain; its full sequence is RasGAP-activating-like protein 1 (799 aa).

C2 domains follow at residues 1–105 and 116–231; these read MAKS…DSWI and VQGE…NGWF. Ca(2+) is bound by residues D21, D27, D74, D76, D82, D149, D155, D202, D204, and D210. The region spanning 316-544 is the Ras-GAP domain; it reads GLAGPFLDYL…SRVRDFLDQL (229 aa). Position 400 is a phosphothreonine (T400). The 108-residue stretch at 565-672 folds into the PH domain; sequence TIVREGFLLK…WLSALRKASA (108 aa). The Btk-type zinc-finger motif lies at 674-710; sequence NPGKLVACHPGAFRSGRWTCCLQAERSAAGCSRTHSA. Zn(2+) is bound by residues H682, C693, C694, and C704.

The cofactor is Ca(2+).

In terms of biological role, probable inhibitory regulator of the Ras-cyclic AMP pathway. Plays a role in dendrite formation by melanocytes. The protein is RasGAP-activating-like protein 1 of Mus musculus (Mouse).